A 322-amino-acid polypeptide reads, in one-letter code: Solute carrier family 35 member B1 (322 aa).

8 helical membrane-spanning segments follow: residues 12–32 (LRLP…GILQ), 51–71 (FALT…KILI), 85–105 (WLYA…NSAL), 136–156 (YPLA…LFMY), 168–188 (TVGF…LTGV), 210–230 (LWST…WEFL), 243–263 (ILLF…TVVY), and 285–305 (VILF…LVFL). Positions 318–322 (KKTSH) match the Di-lysine motif motif.

Belongs to the nucleotide-sugar transporter family. SLC35B subfamily.

It is found in the endoplasmic reticulum membrane. The enzyme catalyses ADP(in) + ATP(out) = ADP(out) + ATP(in). The catalysed reaction is UDP(out) + ATP(in) = UDP(in) + ATP(out). It catalyses the reaction UTP(out) + ATP(in) = UTP(in) + ATP(out). It carries out the reaction dATP(out) + ATP(in) = dATP(in) + ATP(out). ATP:ADP antiporter that catalyzes the exchange of ATP and ADP across the endoplasmic reticulum (ER) membrane. Imports ATP from the cytosol to the ER lumen and exports ADP in the opposite direction. Regulates ER energy metabolism and protein biogenesis. Appears to be part of a calcium-dependent ER to cytosol low energy response axis, where calcium efflux from ER to the cytosol triggers ATP import into the ER lumen to maintain sufficient ATP supply. Provides ATP to ER chaperone HSPA5 that drives protein folding and trafficking in the ER. Can transport dATP, UTP or UDP in exchange for ATP, but the physiological relevance of this process remains to be established. This Mus musculus (Mouse) protein is Solute carrier family 35 member B1 (Slc35b1).